The following is a 233-amino-acid chain: Ubiquitin carboxyl-terminal hydrolase isozyme L4 (233 aa).

Positions 5–232 constitute a UCH catalytic domain; sequence RWLPLEANPE…LRFNAIALSA (228 aa). An interaction with ubiquitin region spans residues 8 to 13; sequence PLEANP. Cys-95 serves as the catalytic Nucleophile. At Ser-133 the chain carries Phosphoserine. The active-site Proton donor is His-172. Residues 222–227 are interaction with ubiquitin; that stretch reads ELRFNA.

This sequence belongs to the peptidase C12 family. Expressed in various tissues at low level.

The protein resides in the cytoplasm. It catalyses the reaction Thiol-dependent hydrolysis of ester, thioester, amide, peptide and isopeptide bonds formed by the C-terminal Gly of ubiquitin (a 76-residue protein attached to proteins as an intracellular targeting signal).. Its function is as follows. Ubiquitin-protein hydrolase is involved both in the processing of ubiquitin precursors and of ubiquitinated proteins. This enzyme is a thiol protease that recognizes and hydrolyzes a peptide bond at the C-terminal glycine of ubiquitin. This Mus musculus (Mouse) protein is Ubiquitin carboxyl-terminal hydrolase isozyme L4 (Uchl4).